The primary structure comprises 296 residues: 4-diphosphocytidyl-2-C-methyl-D-erythritol kinase (296 aa).

Lysine 22 is a catalytic residue. 105–115 (PMGGGLGGGSS) is an ATP binding site. Aspartate 147 is an active-site residue.

The protein belongs to the GHMP kinase family. IspE subfamily.

It carries out the reaction 4-CDP-2-C-methyl-D-erythritol + ATP = 4-CDP-2-C-methyl-D-erythritol 2-phosphate + ADP + H(+). Its pathway is isoprenoid biosynthesis; isopentenyl diphosphate biosynthesis via DXP pathway; isopentenyl diphosphate from 1-deoxy-D-xylulose 5-phosphate: step 3/6. Functionally, catalyzes the phosphorylation of the position 2 hydroxy group of 4-diphosphocytidyl-2C-methyl-D-erythritol. The chain is 4-diphosphocytidyl-2-C-methyl-D-erythritol kinase from Photobacterium profundum (strain SS9).